Here is a 318-residue protein sequence, read N- to C-terminus: Aspartate carbamoyltransferase catalytic subunit (318 aa).

The carbamoyl phosphate site is built by Arg-58 and Thr-59. Lys-86 contributes to the L-aspartate binding site. Arg-108, His-141, and Gln-144 together coordinate carbamoyl phosphate. The L-aspartate site is built by Arg-174 and Arg-226. Gly-270 and Pro-271 together coordinate carbamoyl phosphate.

This sequence belongs to the aspartate/ornithine carbamoyltransferase superfamily. ATCase family. In terms of assembly, heterododecamer (2C3:3R2) of six catalytic PyrB chains organized as two trimers (C3), and six regulatory PyrI chains organized as three dimers (R2).

It catalyses the reaction carbamoyl phosphate + L-aspartate = N-carbamoyl-L-aspartate + phosphate + H(+). The protein operates within pyrimidine metabolism; UMP biosynthesis via de novo pathway; (S)-dihydroorotate from bicarbonate: step 2/3. Its function is as follows. Catalyzes the condensation of carbamoyl phosphate and aspartate to form carbamoyl aspartate and inorganic phosphate, the committed step in the de novo pyrimidine nucleotide biosynthesis pathway. The chain is Aspartate carbamoyltransferase catalytic subunit from Lactobacillus delbrueckii subsp. bulgaricus (strain ATCC 11842 / DSM 20081 / BCRC 10696 / JCM 1002 / NBRC 13953 / NCIMB 11778 / NCTC 12712 / WDCM 00102 / Lb 14).